The chain runs to 207 residues: Glycerol-3-phosphate acyltransferase 1 (207 aa).

The next 5 membrane-spanning stretches (helical) occupy residues 3-23 (YVIA…QIVG), 53-73 (IVVA…LLIL), 85-105 (HIYI…PITM), 127-147 (IALI…YLAV), and 154-174 (ISFL…IVVG).

The protein belongs to the PlsY family. In terms of assembly, probably interacts with PlsX.

The protein localises to the cell membrane. The enzyme catalyses an acyl phosphate + sn-glycerol 3-phosphate = a 1-acyl-sn-glycero-3-phosphate + phosphate. It participates in lipid metabolism; phospholipid metabolism. In terms of biological role, catalyzes the transfer of an acyl group from acyl-phosphate (acyl-PO(4)) to glycerol-3-phosphate (G3P) to form lysophosphatidic acid (LPA). This enzyme utilizes acyl-phosphate as fatty acyl donor, but not acyl-CoA or acyl-ACP. The sequence is that of Glycerol-3-phosphate acyltransferase 1 from Oceanobacillus iheyensis (strain DSM 14371 / CIP 107618 / JCM 11309 / KCTC 3954 / HTE831).